The chain runs to 117 residues: Transcription elongation factor A protein-like 8 (117 aa).

The interval 1–82 (MQKSCDENEG…EEVIRGVDEL (82 aa)) is disordered. Over residues 41–82 (NVREETEGSHRGEPAEPSPEPKEDTPARHLNPEEVIRGVDEL) the composition is skewed to basic and acidic residues. Residues 73-100 (EEVIRGVDELERLREEIRRVRNKFVLMH) are a coiled coil.

It belongs to the TFS-II family. TFA subfamily.

The protein resides in the nucleus. Functionally, may be involved in transcriptional regulation. The chain is Transcription elongation factor A protein-like 8 (Tceal8) from Mus musculus (Mouse).